The primary structure comprises 474 residues: Probable dipeptidase B (474 aa).

C11 is an active-site residue.

Belongs to the peptidase C69 family.

The catalysed reaction is an L-aminoacyl-L-amino acid + H2O = 2 an L-alpha-amino acid. The protein is Probable dipeptidase B (pepDB) of Lactococcus lactis subsp. lactis (strain IL1403) (Streptococcus lactis).